A 447-amino-acid polypeptide reads, in one-letter code: 23S rRNA (uracil(1939)-C(5))-methyltransferase RlmD (447 aa).

One can recognise a TRAM domain in the interval 7 to 66; it reads RKPLSQEPQKASIEALTHEGRGIAHVAGKTVFIDGALPGETVWFHYLRRRGKFDEGRVLE. [4Fe-4S] cluster-binding residues include cysteine 79, cysteine 85, cysteine 88, and cysteine 168. Residues glutamine 275, phenylalanine 304, asparagine 309, glutamate 325, aspartate 352, and aspartate 374 each contribute to the S-adenosyl-L-methionine site. The Nucleophile role is filled by cysteine 400.

It belongs to the class I-like SAM-binding methyltransferase superfamily. RNA M5U methyltransferase family. RlmD subfamily.

The enzyme catalyses uridine(1939) in 23S rRNA + S-adenosyl-L-methionine = 5-methyluridine(1939) in 23S rRNA + S-adenosyl-L-homocysteine + H(+). Its function is as follows. Catalyzes the formation of 5-methyl-uridine at position 1939 (m5U1939) in 23S rRNA. The protein is 23S rRNA (uracil(1939)-C(5))-methyltransferase RlmD of Nitrosococcus oceani (strain ATCC 19707 / BCRC 17464 / JCM 30415 / NCIMB 11848 / C-107).